Here is a 142-residue protein sequence, read N- to C-terminus: Large ribosomal subunit protein uL16 (142 aa).

Belongs to the universal ribosomal protein uL16 family. In terms of assembly, part of the 50S ribosomal subunit.

Its function is as follows. Binds 23S rRNA and is also seen to make contacts with the A and possibly P site tRNAs. This Thermosipho africanus (strain TCF52B) protein is Large ribosomal subunit protein uL16.